The following is a 385-amino-acid chain: 3-hydroxyisobutyryl-CoA hydrolase, mitochondrial (385 aa).

Residues 1 to 32 (MGQPYAWRLLSRVSSFRRASVILQHLRMSMHT) constitute a mitochondrion transit peptide. N6-acetyllysine; alternate occurs at positions 54, 91, and 100. N6-succinyllysine; alternate occurs at positions 54, 91, and 100. Substrate-binding residues include Glu-120, Gly-145, Glu-168, and Asp-176. Lys-220 is modified (N6-acetyllysine; alternate). Residue Lys-220 is modified to N6-succinyllysine; alternate. Ser-233 is subject to Phosphoserine. An N6-succinyllysine mark is found at Lys-249 and Lys-256. Residue Lys-296 is modified to N6-acetyllysine; alternate. Lys-296 carries the post-translational modification N6-succinyllysine; alternate. The residue at position 300 (Lys-300) is an N6-succinyllysine. Lys-352 bears the N6-acetyllysine; alternate mark. Residue Lys-352 is modified to N6-succinyllysine; alternate. 2 positions are modified to N6-acetyllysine: Lys-359 and Lys-364. Lys-376 carries the N6-succinyllysine modification.

This sequence belongs to the enoyl-CoA hydratase/isomerase family.

The protein localises to the mitochondrion. The enzyme catalyses 3-hydroxy-2-methylpropanoyl-CoA + H2O = 3-hydroxy-2-methylpropanoate + CoA + H(+). Its pathway is amino-acid degradation; L-valine degradation. Its function is as follows. Hydrolyzes 3-hydroxyisobutyryl-CoA (HIBYL-CoA), a saline catabolite. Has high activity toward isobutyryl-CoA. Could be an isobutyryl-CoA dehydrogenase that functions in valine catabolism. Also hydrolyzes 3-hydroxypropanoyl-CoA. This chain is 3-hydroxyisobutyryl-CoA hydrolase, mitochondrial (Hibch), found in Mus musculus (Mouse).